Reading from the N-terminus, the 392-residue chain is Tryptophan synthase beta chain (392 aa).

Position 84 is an N6-(pyridoxal phosphate)lysine (lysine 84).

This sequence belongs to the TrpB family. In terms of assembly, tetramer of two alpha and two beta chains. Requires pyridoxal 5'-phosphate as cofactor.

The enzyme catalyses (1S,2R)-1-C-(indol-3-yl)glycerol 3-phosphate + L-serine = D-glyceraldehyde 3-phosphate + L-tryptophan + H2O. Its pathway is amino-acid biosynthesis; L-tryptophan biosynthesis; L-tryptophan from chorismate: step 5/5. The beta subunit is responsible for the synthesis of L-tryptophan from indole and L-serine. The protein is Tryptophan synthase beta chain (trpB) of Chlamydia trachomatis serovar D (strain ATCC VR-885 / DSM 19411 / UW-3/Cx).